A 447-amino-acid polypeptide reads, in one-letter code: Putative short-chain fatty acid transporter (447 aa).

A run of 11 helical transmembrane segments spans residues 17-37, 49-69, 98-118, 136-156, 188-208, 252-272, 284-304, 321-341, 359-379, 402-422, and 427-447; these read LPDP…CAWG, MWGN…LIVV, VVLV…FGLV, YALL…GFSG, TLFS…LPFI, FLAY…FYKN, IFLI…RAII, AGVQ…EFFI, FINF…PFVI, WMNM…GLGV, and GFCM…LYFL.

Its subcellular location is the cell inner membrane. Its function is as follows. May be responsible for the uptake of short-chain fatty acids. This chain is Putative short-chain fatty acid transporter (atoE), found in Haemophilus influenzae (strain ATCC 51907 / DSM 11121 / KW20 / Rd).